A 245-amino-acid chain; its full sequence is Probable ABC transporter ATP-binding protein p29 (245 aa).

Positions 7–245 (LSFEKVSIIY…KEQLYKIYDN (239 aa)) constitute an ABC transporter domain. 39–46 (GKSGVGKS) contributes to the ATP binding site.

The protein belongs to the ABC transporter superfamily.

Functionally, part of a high-affinity transport system. The sequence is that of Probable ABC transporter ATP-binding protein p29 (p29) from Mycoplasma genitalium (strain ATCC 33530 / DSM 19775 / NCTC 10195 / G37) (Mycoplasmoides genitalium).